A 671-amino-acid chain; its full sequence is MTLLSPGIENKEINLASAIGRAATGRAAMVGKFEWGPAYSITQVTSESDLVTIFGRPNDYTAASFMTANNFLKYGNDLRLVRICDATTAQNATPLYNAVEYTIGASNGCVVGDDITITYSGVGALTAKGKVLEVDAGNNNAASKIFLPSAEIVAAAKSDGNYPSVGTITLQPTQGDIALTNIEIIDTGSVYFPNIELAFDALTAIETEGGALKYADLIEKQGFPRLSARYVGDFGDAISVEIINYADYQTAFAFAAGHTLGDIELPIYPDGGTRSINLSSYFTFGPSNSNQYAVIVRVSGEVEEAFIVSTNPGDKDVNGQSIFIDEYFENSGSAYITAIAEGWKTESGAYNFGGGSDANAGADDWMFGLDMLSDPEVLYTNLVIAGNAAAEEVSIASTVQKYAIDSVGNVRQDCVVFVSPPQSLIVNKQAGTAVANIQGWRTGIDPTNGQAVVDNLNVSTTYAVIDGNYKYQYDKYNDRNRWVPLAGDIAGLCAYTDQVSQPWMSPAGFNRGQIKGVNRLAVDLRRAHRDALYQIGINPVVGFAGQGFVLYGDKTATQQASAFDRINVRRLFNLLKKAISDAAKYRLFELNDEFTRSSFKSEIDAYLTNIQDLGGVYDFRVVCDETNNPGSVIDRNEFVASIYVKPAKSINFITLNFVATSTDADFAEIIG.

Belongs to the myoviridae tail sheath protein family. As to quaternary structure, homomultimer.

The protein resides in the virion. Its subcellular location is the host cytoplasm. In terms of biological role, polymerizes as an extended structure around the baseplate-tail tube complex. During ejection, the sheath shifts to a contracted form, thereby making the inner tail tube protrude through the host cell envelope. This is Tail sheath protein from Vibrio phage KVP40 (isolate Vibrio parahaemolyticus/Japan/Matsuzaki/1991) (KVP40).